Here is a 444-residue protein sequence, read N- to C-terminus: Xaa-Pro dipeptidase (444 aa).

The Mn(2+) site is built by aspartate 247, aspartate 258, histidine 340, glutamate 385, and glutamate 424.

The protein belongs to the peptidase M24B family. Bacterial-type prolidase subfamily. It depends on Mn(2+) as a cofactor.

The catalysed reaction is Xaa-L-Pro dipeptide + H2O = an L-alpha-amino acid + L-proline. In terms of biological role, splits dipeptides with a prolyl residue in the C-terminal position. This chain is Xaa-Pro dipeptidase, found in Photorhabdus laumondii subsp. laumondii (strain DSM 15139 / CIP 105565 / TT01) (Photorhabdus luminescens subsp. laumondii).